Here is a 389-residue protein sequence, read N- to C-terminus: Chalcone synthase 6 (389 aa).

Residue cysteine 164 is part of the active site.

This sequence belongs to the thiolase-like superfamily. Chalcone/stilbene synthases family.

The enzyme catalyses (E)-4-coumaroyl-CoA + 3 malonyl-CoA + 3 H(+) = 2',4,4',6'-tetrahydroxychalcone + 3 CO2 + 4 CoA. The protein operates within secondary metabolite biosynthesis; flavonoid biosynthesis. In terms of biological role, the primary product of this enzyme is 4,2',4',6'-tetrahydroxychalcone (also termed naringenin-chalcone or chalcone) which can under specific conditions spontaneously isomerize into naringenin. The sequence is that of Chalcone synthase 6 (CHS6) from Pisum sativum (Garden pea).